The primary structure comprises 203 residues: NADH-quinone oxidoreductase subunit C (203 aa).

This sequence belongs to the complex I 30 kDa subunit family. NDH-1 is composed of 14 different subunits. Subunits NuoB, C, D, E, F, and G constitute the peripheral sector of the complex.

It is found in the cell inner membrane. It carries out the reaction a quinone + NADH + 5 H(+)(in) = a quinol + NAD(+) + 4 H(+)(out). Its function is as follows. NDH-1 shuttles electrons from NADH, via FMN and iron-sulfur (Fe-S) centers, to quinones in the respiratory chain. The immediate electron acceptor for the enzyme in this species is believed to be ubiquinone. Couples the redox reaction to proton translocation (for every two electrons transferred, four hydrogen ions are translocated across the cytoplasmic membrane), and thus conserves the redox energy in a proton gradient. This chain is NADH-quinone oxidoreductase subunit C, found in Methylibium petroleiphilum (strain ATCC BAA-1232 / LMG 22953 / PM1).